We begin with the raw amino-acid sequence, 142 residues long: Cystatin-8 (142 aa).

The signal sequence occupies residues 1 to 19 (MAKPLWLSLILFIIPVALA). N39 carries an N-linked (GlcNAc...) asparagine glycan. Positions 77–81 (QITDR) match the Secondary area of contact motif. Cystine bridges form between C95/C105 and C119/C139. N100 is a glycosylation site (N-linked (GlcNAc...) asparagine).

The protein belongs to the cystatin family. As to expression, proximal caput region of the epididymis. Lower expression in the testis. Within the testis it is localized to the elongating spermatids, whereas within the epididymis it is exclusively synthesized by the proximal caput epithelium.

The protein resides in the secreted. Performs a specialized role during sperm development and maturation. This chain is Cystatin-8 (Cst8), found in Mus musculus (Mouse).